The sequence spans 712 residues: Dynamin-1-like protein drp-1 (712 aa).

Residues 24 to 304 (QIQLPQIVVV…LMHHIRNCLP (281 aa)) form the Dynamin-type G domain. The segment at 34-41 (GSQSAGKS) is G1 motif. The interval 60–62 (VTR) is G2 motif. A G3 motif region spans residues 148-151 (DLPG). Positions 217 to 220 (TKLD) are G4 motif. Residues 247 to 250 (VNRS) are G5 motif. Residues 280–502 (SRNGTPYLAK…LAYINTKHPE (223 aa)) are interaction with caspase ced-9. The disordered stretch occupies residues 523–542 (GRSRNRHASTGERAVSAHGE). The GED domain occupies 620-711 (VAIIERLIRN…IISEVRETQV (92 aa)).

Belongs to the TRAFAC class dynamin-like GTPase superfamily. Dynamin/Fzo/YdjA family. As to quaternary structure, interacts (via residues 280-502) with caspase ced-9; the interaction is enhanced by GTP rather than GDP; the interaction is probably direct and may occur at the mitochondrion. Highly expressed in neurons, in intestinal cells and in the body wall, pharyngeal, and vulval muscles.

It is found in the mitochondrion. The protein localises to the mitochondrion outer membrane. Its subcellular location is the cytoplasm. It localises to the cytosol. The enzyme catalyses GTP + H2O = GDP + phosphate + H(+). Its activity is regulated as follows. GTPase activity is increased by binding to phospholipid membranes. Functions in mitochondrial division. Functions in peroxisomal division. Mediates membrane fission, perhaps mainly of the mitochondrial outer membrane. Mitochondrial fission may be promoted by recruitment to mitochondrial membranes via the egl-1/ced-9 complex. Involved in the coordination of mitochondrial division with autophagy in response to acute heat stress during larval development. Plays a role in apoptosis by promoting mitochondrial elimination and cell-death execution, acting downstream of caspase ced-3, and perhaps independently of FIS1-related protein fis-2, caspase ced-9 and apoptosis-inducing factor AIFM/wah-1. Role in promoting apoptosis dependent upon cleavage of drp-1 by ced-3. Involved in negatively modulating longevity in concert with the Insulin/IGF-1-like signaling (IIS) mediated pathway. The chain is Dynamin-1-like protein drp-1 from Caenorhabditis elegans.